Reading from the N-terminus, the 129-residue chain is Copper chaperone GriE (129 aa).

Positions 1–37 (MPMNRREMVMATTGAALAAAAAVPLLSGGEGEGAAEA) form a signal peptide, tat-type signal. The interval 32–51 (EGAAEAAAAPAKATGRGREH) is disordered. A compositionally biased stretch (low complexity) spans 34–45 (AAEAAAAPAKAT).

The protein belongs to the melC1 family. In terms of processing, predicted to be exported by the Tat system. The position of the signal peptide cleavage has not been experimentally proven.

Involved in the transfer of Cu(2+) ions to the apo form of o-aminophenol oxidase GriF in the grixazone biosynthetic pathway. This is Copper chaperone GriE (griE) from Streptomyces griseus subsp. griseus (strain JCM 4626 / CBS 651.72 / NBRC 13350 / KCC S-0626 / ISP 5235).